A 187-amino-acid chain; its full sequence is Phosphatidylethanolamine-binding protein 1 (187 aa).

At alanine 2 the chain carries N-acetylalanine; in peptide hippocampal cholinergic neurostimulating. Serine 6 bears the Phosphoserine mark. Threonine 42 is modified (phosphothreonine). Phosphoserine occurs at positions 51, 52, 54, 98, and 132. The interaction with RAF1 stretch occupies residues 93–134 (KGNDISSGTVLSDYVGSGPPSGTGLHRYVWLVYEQEQPLSCD).

Belongs to the phosphatidylethanolamine-binding protein family. As to quaternary structure, has a tendency to form dimers by disulfide cross-linking. Interacts with RAF1 and this interaction is enhanced if RAF1 is phosphorylated on residues 'Ser-338', 'Ser-339', 'Tyr-340' and 'Tyr-341'. Interacts with ALOX15; in response to IL13/interleukin-13, prevents the interaction of PEBP1 with RAF1 to activate the ERK signaling cascade. As to expression, HCNP is expressed in brain. Increased expression in aged senescence-accelerated mice.

The protein resides in the cytoplasm. In terms of biological role, binds ATP, opioids and phosphatidylethanolamine. Has lower affinity for phosphatidylinositol and phosphatidylcholine. Serine protease inhibitor which inhibits thrombin, neuropsin and chymotrypsin but not trypsin, tissue type plasminogen activator and elastase. Inhibits the kinase activity of RAF1 by inhibiting its activation and by dissociating the RAF1/MEK complex and acting as a competitive inhibitor of MEK phosphorylation. HCNP may be involved in the function of the presynaptic cholinergic neurons of the central nervous system. HCNP increases the production of choline acetyltransferase but not acetylcholinesterase. Seems to be mediated by a specific receptor. The protein is Phosphatidylethanolamine-binding protein 1 (Pebp1) of Mus musculus (Mouse).